A 121-amino-acid chain; its full sequence is Met-lysine-1a (121 aa).

The signal sequence occupies residues 1–22 (MKSFVFALALIVAFACISESKS). Residues 23–69 (DHTGYEEEENLEDSELTDLVTAALLEELAEASEMDDLSYTEEAGGER) constitute a propeptide that is removed on maturation. The residue at position 120 (methionine 120) is a Methionine amide.

Expressed by the venom gland.

The protein resides in the secreted. In terms of biological role, shows no antimicrobial activity against Gram-positive bacterium B.subtilis B-501 or Gram-negative bacterium E.coli DH5-alpha at concentrations up to 20 ug/ml. Shows no toxicity towards insect (S.carnaria) larvae. This is Met-lysine-1a from Lachesana tarabaevi (Spider).